Consider the following 949-residue polypeptide: RNA polymerase-associated protein RapA (949 aa).

The Helicase ATP-binding domain maps to 164 to 332 (EVADRIAPRV…FARLRLLDPN (169 aa)). 177–184 (DEVGLGKT) is a binding site for ATP. The short motif at 278 to 281 (DEAH) is the DEAH box element. A Helicase C-terminal domain is found at 474-628 (RVEWLIDTLK…TCPTGNALQH (155 aa)).

Belongs to the SNF2/RAD54 helicase family. RapA subfamily. In terms of assembly, interacts with the RNAP. Has a higher affinity for the core RNAP than for the holoenzyme. Its ATPase activity is stimulated by binding to RNAP.

Functionally, transcription regulator that activates transcription by stimulating RNA polymerase (RNAP) recycling in case of stress conditions such as supercoiled DNA or high salt concentrations. Probably acts by releasing the RNAP, when it is trapped or immobilized on tightly supercoiled DNA. Does not activate transcription on linear DNA. Probably not involved in DNA repair. The polypeptide is RNA polymerase-associated protein RapA (Stutzerimonas stutzeri (strain A1501) (Pseudomonas stutzeri)).